A 191-amino-acid chain; its full sequence is Protein LIGHT-DEPENDENT SHORT HYPOCOTYLS 9 (191 aa).

A compositionally biased stretch (basic and acidic residues) spans 1–14 (MSSDRHTPTKDPPD). Disordered stretches follow at residues 1–41 (MSSD…YESQ) and 153–191 (QAKARGIPYRKKKRRKTKNEVVVVKKDVANSSTPNQSFT). Residues 37 to 165 (RYESQKRRDW…ARGIPYRKKK (129 aa)) form the ALOG domain. A compositionally biased stretch (basic residues) spans 160–169 (PYRKKKRRKT). Positions 163 to 167 (KKKRR) match the Nuclear localization signal motif. Residues 181–191 (ANSSTPNQSFT) show a composition bias toward polar residues.

It belongs to the plant homeotic and developmental regulators ALOG protein family.

Its subcellular location is the nucleus. Its function is as follows. Probable transcription regulator that acts as a developmental regulator by promoting cell growth in response to light. This is Protein LIGHT-DEPENDENT SHORT HYPOCOTYLS 9 (LSH9) from Arabidopsis thaliana (Mouse-ear cress).